A 234-amino-acid chain; its full sequence is Phosphoribosylaminoimidazole-succinocarboxamide synthase (234 aa).

It belongs to the SAICAR synthetase family.

It carries out the reaction 5-amino-1-(5-phospho-D-ribosyl)imidazole-4-carboxylate + L-aspartate + ATP = (2S)-2-[5-amino-1-(5-phospho-beta-D-ribosyl)imidazole-4-carboxamido]succinate + ADP + phosphate + 2 H(+). It functions in the pathway purine metabolism; IMP biosynthesis via de novo pathway; 5-amino-1-(5-phospho-D-ribosyl)imidazole-4-carboxamide from 5-amino-1-(5-phospho-D-ribosyl)imidazole-4-carboxylate: step 1/2. This Staphylococcus aureus (strain MRSA252) protein is Phosphoribosylaminoimidazole-succinocarboxamide synthase.